A 115-amino-acid polypeptide reads, in one-letter code: NADH-ubiquinone oxidoreductase chain 3 (115 aa).

The next 3 helical transmembrane spans lie at 4-24 (LVTMLINTTLSFVLILIAFWL), 55-75 (FFLVAITFLLFDLEIALLLPM), and 86-106 (TMTLTAFILLSVLALGLAYEW).

It belongs to the complex I subunit 3 family. Core subunit of respiratory chain NADH dehydrogenase (Complex I) which is composed of 45 different subunits. Interacts with TMEM186. Interacts with TMEM242.

It is found in the mitochondrion inner membrane. It catalyses the reaction a ubiquinone + NADH + 5 H(+)(in) = a ubiquinol + NAD(+) + 4 H(+)(out). Core subunit of the mitochondrial membrane respiratory chain NADH dehydrogenase (Complex I) which catalyzes electron transfer from NADH through the respiratory chain, using ubiquinone as an electron acceptor. Essential for the catalytic activity of complex I. This is NADH-ubiquinone oxidoreductase chain 3 from Nelsonia neotomodon (Diminutive woodrat).